The primary structure comprises 229 residues: Biosynthetic peptidoglycan transglycosylase (229 aa).

Residues 11–31 (NLLLALFLVLVAGPVVAVILY) traverse the membrane as a helical segment.

Belongs to the glycosyltransferase 51 family.

It localises to the cell inner membrane. The catalysed reaction is [GlcNAc-(1-&gt;4)-Mur2Ac(oyl-L-Ala-gamma-D-Glu-L-Lys-D-Ala-D-Ala)](n)-di-trans,octa-cis-undecaprenyl diphosphate + beta-D-GlcNAc-(1-&gt;4)-Mur2Ac(oyl-L-Ala-gamma-D-Glu-L-Lys-D-Ala-D-Ala)-di-trans,octa-cis-undecaprenyl diphosphate = [GlcNAc-(1-&gt;4)-Mur2Ac(oyl-L-Ala-gamma-D-Glu-L-Lys-D-Ala-D-Ala)](n+1)-di-trans,octa-cis-undecaprenyl diphosphate + di-trans,octa-cis-undecaprenyl diphosphate + H(+). It functions in the pathway cell wall biogenesis; peptidoglycan biosynthesis. Its function is as follows. Peptidoglycan polymerase that catalyzes glycan chain elongation from lipid-linked precursors. The protein is Biosynthetic peptidoglycan transglycosylase of Caulobacter vibrioides (strain ATCC 19089 / CIP 103742 / CB 15) (Caulobacter crescentus).